Consider the following 427-residue polypeptide: Glutamate-1-semialdehyde 2,1-aminomutase (427 aa).

Lysine 266 carries the N6-(pyridoxal phosphate)lysine modification.

The protein belongs to the class-III pyridoxal-phosphate-dependent aminotransferase family. HemL subfamily. As to quaternary structure, homodimer. Pyridoxal 5'-phosphate serves as cofactor.

The protein resides in the cytoplasm. The catalysed reaction is (S)-4-amino-5-oxopentanoate = 5-aminolevulinate. It participates in porphyrin-containing compound metabolism; protoporphyrin-IX biosynthesis; 5-aminolevulinate from L-glutamyl-tRNA(Glu): step 2/2. The polypeptide is Glutamate-1-semialdehyde 2,1-aminomutase (Dechloromonas aromatica (strain RCB)).